Reading from the N-terminus, the 242-residue chain is Endoglucanase-5 (242 aa).

A signal peptide spans 1-17 (MKATLVLGSLIVGAVSA). Residues 18-182 (YKATTTRYYD…ETDPTPVLGN (165 aa)) form a catalytic region. The active-site Nucleophile is the Asp27. Asp134 functions as the Proton donor in the catalytic mechanism. The disordered stretch occupies residues 177-206 (TPVLGNDTGSTPPGSSPPATSSSPPSGGGQ). Asn182 is a glycosylation site (N-linked (GlcNAc...) asparagine). The span at 184–201 (TGSTPPGSSPPATSSSPP) shows a compositional bias: low complexity. Positions 205-241 (GQQTLYGQCGGAGWTGPTTCQAPGTCKVQNQWYSQCL) constitute a CBM1 domain. Cystine bridges form between Cys213/Cys230 and Cys224/Cys240.

It belongs to the glycosyl hydrolase 45 (cellulase K) family.

It carries out the reaction Endohydrolysis of (1-&gt;4)-beta-D-glucosidic linkages in cellulose, lichenin and cereal beta-D-glucans.. This is Endoglucanase-5 (egl5) from Hypocrea jecorina (Trichoderma reesei).